The chain runs to 96 residues: Aspartyl/glutamyl-tRNA(Asn/Gln) amidotransferase subunit C (96 aa).

Belongs to the GatC family. Heterotrimer of A, B and C subunits.

The catalysed reaction is L-glutamyl-tRNA(Gln) + L-glutamine + ATP + H2O = L-glutaminyl-tRNA(Gln) + L-glutamate + ADP + phosphate + H(+). It catalyses the reaction L-aspartyl-tRNA(Asn) + L-glutamine + ATP + H2O = L-asparaginyl-tRNA(Asn) + L-glutamate + ADP + phosphate + 2 H(+). Allows the formation of correctly charged Asn-tRNA(Asn) or Gln-tRNA(Gln) through the transamidation of misacylated Asp-tRNA(Asn) or Glu-tRNA(Gln) in organisms which lack either or both of asparaginyl-tRNA or glutaminyl-tRNA synthetases. The reaction takes place in the presence of glutamine and ATP through an activated phospho-Asp-tRNA(Asn) or phospho-Glu-tRNA(Gln). The polypeptide is Aspartyl/glutamyl-tRNA(Asn/Gln) amidotransferase subunit C (Aliarcobacter butzleri (strain RM4018) (Arcobacter butzleri)).